The primary structure comprises 576 residues: MAGUK p55 subfamily member 2 (576 aa).

L27 domains are found at residues 8–60 (SETA…FMQQ) and 84–142 (LEAV…YETP). Phosphoserine is present on Ser42. A Phosphothreonine modification is found at Thr141. Ser145 is modified (phosphoserine). Residues 185 to 240 (ELVIARILHGGMVAQQGLLHVGDIIKEVNGQPVGSDPRALQELLRNASGSVILKIL) enclose the PDZ domain. The region spanning 249–317 (PRQVFVKCHF…PSQLLEEKRK (69 aa)) is the SH3 domain. The 188-residue stretch at 374 to 561 (RKTLVLIGAQ…TFRELQTAME (188 aa)) folds into the Guanylate kinase-like domain.

The protein belongs to the MAGUK family. In terms of assembly, can homomultimerise. Interacts with CACNG2. Interacts (via the SH3-Guanylate kinase-like sub-module) with DLG4/PSD95 and DLGAP1/GKAP. Interacts (via the PDZ domain) with CADM1 (via C-terminus). Interacts with KCNN2/SK2 (via N-terminal domain). Interacts with SRC. Phosphorylated by SRC.

The protein localises to the cytoplasm. It is found in the cytoskeleton. It localises to the membrane. The protein resides in the cell projection. Its subcellular location is the dendrite. The protein localises to the postsynaptic density. Functionally, postsynaptic MAGUK scaffold protein that links CADM1 cell adhesion molecules to core components of the postsynaptic density. In CA1 pyramidal neurons, required for synaptic KCNN2-containing channel function and long-term potentiation expression. Seems to negatively regulate SRC function in epithelial cells. The protein is MAGUK p55 subfamily member 2 of Homo sapiens (Human).